A 616-amino-acid chain; its full sequence is Carboxylic acid transporter protein homolog (616 aa).

A compositionally biased stretch (basic and acidic residues) spans 1 to 11 (MSSSITDEKIS). A disordered region spans residues 1–65 (MSSSITDEKI…LYHNPSLPAQ (65 aa)). Ser2 carries the N-acetylserine modification. Residues 2–140 (SSSITDEKIS…LRKMTWQNWN (139 aa)) lie on the Cytoplasmic side of the membrane. Position 4 is a phosphoserine (Ser4). Lys9 participates in a covalent cross-link: Glycyl lysine isopeptide (Lys-Gly) (interchain with G-Cter in ubiquitin). 3 positions are modified to phosphoserine: Ser11, Ser61, and Ser66. At Thr70 the chain carries Phosphothreonine. A helical transmembrane segment spans residues 141-161 (YFFMGYFAWLSAAWAFFCVSV). At 162–176 (SVAPLAELYDRPTKD) the chain is on the extracellular side. A helical membrane pass occupies residues 177 to 197 (ITWGLGLVLFVRSAGAVIFGL). The Cytoplasmic segment spans residues 198–205 (WTDKSSRK). Residues 206–226 (WPYITCLFLFVIAQLCTPWCD) traverse the membrane as a helical segment. Topologically, residues 227 to 230 (TYEK) are extracellular. Residues 231–251 (FLGVRWITGIAMGGIYGCASA) form a helical membrane-spanning segment. Topologically, residues 252-263 (TAIEDAPVKARS) are cytoplasmic. A helical membrane pass occupies residues 264 to 284 (FLSGLFFSAYAMGFIFAIIFY). Topologically, residues 285–296 (RAFGYFRDDGWK) are extracellular. Residues 297 to 317 (ILFWFSIFLPILLIFWRLLWP) form a helical membrane-spanning segment. Residues 318-363 (ETKYFTKVLKARKLILSDAVKANGGEPLPKANFKQKMVSMKRTVQK) lie on the Cytoplasmic side of the membrane. A Glycyl lysine isopeptide (Lys-Gly) (interchain with G-Cter in ubiquitin) cross-link involves residue Lys338. The chain crosses the membrane as a helical span at residues 364-384 (YWLLFAYLVVLLVGPNYLTHA). The Extracellular portion of the chain corresponds to 385 to 402 (SQDLLPTMLRAQLGLSKD). A helical membrane pass occupies residues 403–423 (AVTVIVVVTNIGAICGGMIFG). Residues 424-432 (QFMEVTGRR) are Cytoplasmic-facing. Residues 433-453 (LGLLIACTMGGCFTYPAFMLR) traverse the membrane as a helical segment. The Extracellular segment spans residues 454-457 (SEKA). A helical membrane pass occupies residues 458–478 (ILGAGFMLYFCVFGVWGILPI). Residues 479 to 489 (HLAELAPADAR) are Cytoplasmic-facing. A helical transmembrane segment spans residues 490–510 (ALVAGLSYQLGNLASAAASTI). The Extracellular portion of the chain corresponds to 511–535 (ETQLADRYPLERDASGAVIKEDYAK). A helical membrane pass occupies residues 536-556 (VMAILTGSVFIFTFACVFVGH). The Cytoplasmic portion of the chain corresponds to 557–616 (EKFHRDLSSPVMKKYINQVEEYEADGLSISDIVEQKTECASVKMIDSNVSKTYEEHIETV). Phosphoserine occurs at positions 584, 603, and 606.

The protein belongs to the major facilitator superfamily. Sugar transporter (TC 2.A.1.1) family.

Its subcellular location is the membrane. In terms of biological role, essential to lactate transport. The chain is Carboxylic acid transporter protein homolog (JEN1) from Saccharomyces cerevisiae (strain ATCC 204508 / S288c) (Baker's yeast).